We begin with the raw amino-acid sequence, 126 residues long: Methylglyoxal synthase (126 aa).

Residues 1 to 126 form the MGS-like domain; it reads MAGGKCIALI…AERLIKTLNH (126 aa). Substrate contacts are provided by residues His12, Lys16, 38–41, and 59–60; these read TGTT and SG. Asp65 (proton donor/acceptor) is an active-site residue. His92 provides a ligand contact to substrate.

The protein belongs to the methylglyoxal synthase family.

The catalysed reaction is dihydroxyacetone phosphate = methylglyoxal + phosphate. Catalyzes the formation of methylglyoxal from dihydroxyacetone phosphate. This chain is Methylglyoxal synthase, found in Rhizobium rhizogenes (strain K84 / ATCC BAA-868) (Agrobacterium radiobacter).